A 101-amino-acid polypeptide reads, in one-letter code: MRERKLRKQLEDLFKRFASVQHGHSDCINIIIAKIKSDQPGESKYARRRRAKSIARCPRCARVSPGFYFTTRCDGKTCRPGLSARPDLLEFIGIDLCVRSK.

The segment at 47–50 (RRRR) is basic. The segment at 57-78 (CPRCARVSPGFYFTTRCDGKTC) adopts a C4-type zinc-finger fold.

The protein belongs to the carlaviruses nucleic acid-binding protein family.

In terms of biological role, suppressor of viral-induced RNA silencing. The potential mechanism of action is based on sequestering siRNAs. In Dianthus caryophyllus (Carnation), this protein is RNA silencing suppressor (TUC).